The primary structure comprises 130 residues: MKVLNNLLYTGDHEWVRVEDNKAYIGISDCAQRMLSDIVFVELPEVDDEIAKGETFATIESVKAASDSYMPVSGTIVEINEELEDNPAALNEDPYGSWIAAIEMSDKNELEELIKPEVYEKICEELDKEA.

A Lipoyl-binding domain is found at 22–103; it reads KAYIGISDCA…PYGSWIAAIE (82 aa). Residue K63 is modified to N6-lipoyllysine.

This sequence belongs to the GcvH family. As to quaternary structure, the glycine cleavage system is composed of four proteins: P, T, L and H. It depends on (R)-lipoate as a cofactor.

The glycine cleavage system catalyzes the degradation of glycine. The H protein shuttles the methylamine group of glycine from the P protein to the T protein. The protein is Glycine cleavage system H protein of Clostridium botulinum (strain Okra / Type B1).